Here is a 491-residue protein sequence, read N- to C-terminus: Probable glycine dehydrogenase (decarboxylating) subunit 2 (491 aa).

At Lys-273 the chain carries N6-(pyridoxal phosphate)lysine.

Belongs to the GcvP family. C-terminal subunit subfamily. In terms of assembly, the glycine cleavage system is composed of four proteins: P, T, L and H. In this organism, the P 'protein' is a heterodimer of two subunits. It depends on pyridoxal 5'-phosphate as a cofactor.

It catalyses the reaction N(6)-[(R)-lipoyl]-L-lysyl-[glycine-cleavage complex H protein] + glycine + H(+) = N(6)-[(R)-S(8)-aminomethyldihydrolipoyl]-L-lysyl-[glycine-cleavage complex H protein] + CO2. The glycine cleavage system catalyzes the degradation of glycine. The P protein binds the alpha-amino group of glycine through its pyridoxal phosphate cofactor; CO(2) is released and the remaining methylamine moiety is then transferred to the lipoamide cofactor of the H protein. In Bacillus velezensis (strain DSM 23117 / BGSC 10A6 / LMG 26770 / FZB42) (Bacillus amyloliquefaciens subsp. plantarum), this protein is Probable glycine dehydrogenase (decarboxylating) subunit 2.